Here is a 204-residue protein sequence, read N- to C-terminus: MFAVFLQGALLGAAMILPLGPQNAFVMNQGIRRQYHLMVALLCALSDMVLITAGIFGGSALLSQSSLLLGAVTWGGVAFLLWFGWGAMKTAFSKNIVLASAEVMKQSRWRIIATMLAVTWLNPHVYLDTFVVLGSLGSQFAGDARSWFALGTMTASFTWFFALALLASWLAPWLNTPRVQRVINFFVGVVMWGIALQLARHGWQ.

6 consecutive transmembrane segments (helical) span residues 1–21, 37–57, 67–87, 111–131, 147–167, and 179–199; these read MFAVFLQGALLGAAMILPLGP, LMVALLCALSDMVLITAGIFG, LLLGAVTWGGVAFLLWFGWGA, IIATMLAVTWLNPHVYLDTFV, WFALGTMTASFTWFFALALLA, and VQRVINFFVGVVMWGIALQLA.

The protein belongs to the LysE/ArgO transporter (TC 2.A.75) family.

The protein localises to the cell inner membrane. The catalysed reaction is L-arginine(in) = L-arginine(out). In terms of biological role, involved in the export of arginine. Important to control the intracellular level of arginine and the correct balance between arginine and lysine. The sequence is that of Arginine exporter protein ArgO from Pectobacterium carotovorum subsp. carotovorum (strain PC1).